Reading from the N-terminus, the 176-residue chain is Ribosome maturation factor RimM (176 aa).

The PRC barrel domain maps to K102 to W175.

This sequence belongs to the RimM family. As to quaternary structure, binds ribosomal protein uS19.

The protein resides in the cytoplasm. In terms of biological role, an accessory protein needed during the final step in the assembly of 30S ribosomal subunit, possibly for assembly of the head region. Essential for efficient processing of 16S rRNA. May be needed both before and after RbfA during the maturation of 16S rRNA. It has affinity for free ribosomal 30S subunits but not for 70S ribosomes. This is Ribosome maturation factor RimM from Buchnera aphidicola subsp. Acyrthosiphon pisum (strain APS) (Acyrthosiphon pisum symbiotic bacterium).